The sequence spans 640 residues: Threonine--tRNA ligase (640 aa).

The TGS domain maps to 1 to 61; the sequence is MPTITLPDGS…ENDASLQIIT (61 aa). Positions 242–533 are catalytic; the sequence is DHRKIGKRLG…LIEHYEGAFP (292 aa). Zn(2+) is bound by residues C333, H384, and H510.

This sequence belongs to the class-II aminoacyl-tRNA synthetase family. In terms of assembly, homodimer. Requires Zn(2+) as cofactor.

The protein localises to the cytoplasm. It catalyses the reaction tRNA(Thr) + L-threonine + ATP = L-threonyl-tRNA(Thr) + AMP + diphosphate + H(+). Its function is as follows. Catalyzes the attachment of threonine to tRNA(Thr) in a two-step reaction: L-threonine is first activated by ATP to form Thr-AMP and then transferred to the acceptor end of tRNA(Thr). Also edits incorrectly charged L-seryl-tRNA(Thr). The sequence is that of Threonine--tRNA ligase from Pseudomonas syringae pv. tomato (strain ATCC BAA-871 / DC3000).